Here is a 201-residue protein sequence, read N- to C-terminus: Dephospho-CoA kinase (201 aa).

The region spanning 3 to 201 is the DPCK domain; that stretch reads WIGLTGGIAC…KWLEELKNQN (199 aa). Position 11–16 (11–16) interacts with ATP; the sequence is ACGKST.

The protein belongs to the CoaE family.

Its subcellular location is the cytoplasm. The enzyme catalyses 3'-dephospho-CoA + ATP = ADP + CoA + H(+). Its pathway is cofactor biosynthesis; coenzyme A biosynthesis; CoA from (R)-pantothenate: step 5/5. Catalyzes the phosphorylation of the 3'-hydroxyl group of dephosphocoenzyme A to form coenzyme A. The protein is Dephospho-CoA kinase of Bdellovibrio bacteriovorus (strain ATCC 15356 / DSM 50701 / NCIMB 9529 / HD100).